Reading from the N-terminus, the 365-residue chain is Quinone oxidoreductase-like protein 2 homolog (365 aa).

This sequence belongs to the zinc-containing alcohol dehydrogenase family. Quinone oxidoreductase subfamily.

The protein is Quinone oxidoreductase-like protein 2 homolog of Nematostella vectensis (Starlet sea anemone).